Consider the following 257-residue polypeptide: Receptor expression-enhancing protein 4 (257 aa).

Helical transmembrane passes span 1 to 21 (MVSW…CPAY) and 42 to 62 (WIVF…ISWF). Phosphoserine occurs at positions 152 and 194. Residues 178–257 (PHQRPPIGYR…KKTVPSDMDS (80 aa)) form a disordered region. T196 is modified (phosphothreonine). Phosphoserine is present on S202. T250 carries the post-translational modification Phosphothreonine. At S253 the chain carries Phosphoserine.

Belongs to the DP1 family.

It localises to the endoplasmic reticulum membrane. Functionally, microtubule-binding protein required to ensure proper cell division and nuclear envelope reassembly by sequestering the endoplasmic reticulum away from chromosomes during mitosis. Probably acts by clearing the endoplasmic reticulum membrane from metaphase chromosomes. The sequence is that of Receptor expression-enhancing protein 4 (REEP4) from Pongo abelii (Sumatran orangutan).